A 365-amino-acid polypeptide reads, in one-letter code: MVLAKQWVLKNLPTPGEPFNFHFHDPACTFELIEKELSSEQLKDGELLLETTYLSNDPAQKFWISSMDKNYAKGVQPGEIIPARGIGKVLASRNKAFSPGDYVSAVTGWTTHAIISQENVQGLRKLDKNKVGKLWWYLSVLGGTSLTAYFIFFTYAQLQEREEDYGKVYLISGAAGAVGTVCIQLALNVFKASKVIAIAGGPEKVAFVESFGDNVVGVDYKDPSFKQKLIEAAGGENTVDYFIDNVGSNVLEAGVLLLKQRAMLIACGAISAYNDPSKFVFKGYSFILTKRLVVKGVLVTDNIDDFPKALDKLGSLVKHGKIDLLKSATLEDGTGDKFKNVPLIWKGLFSGVNKGKLITKVNNEE.

Residues 1 to 133 (MVLAKQWVLK…RKLDKNKVGK (133 aa)) are Cytoplasmic-facing. Residues 134–154 (LWWYLSVLGGTSLTAYFIFFT) traverse the membrane as a helical segment. At 155–169 (YAQLQEREEDYGKVY) the chain is on the extracellular side. The helical transmembrane segment at 170 to 190 (LISGAAGAVGTVCIQLALNVF) threads the bilayer. The Cytoplasmic segment spans residues 191 to 365 (KASKVIAIAG…KLITKVNNEE (175 aa)).

It localises to the membrane. This is an uncharacterized protein from Saccharomyces cerevisiae (strain ATCC 204508 / S288c) (Baker's yeast).